A 243-amino-acid polypeptide reads, in one-letter code: MSQTHFGFQQVDEREKAGKVAGVFHSVASKYDVMNDLMSGGMHRLWKMFTIAQAAVRPGYKVLDIAGGTGDLAKAFARQAGPTGEVWLTDINESMLRVGRDRLLDAGVLTPTCLCDAEHIPFPNAYFDVVTVAFGLRNMTHKDRALAEMRRVVKPGGKVMVLEFSKVWQPLEKAYDVYSFKVLPWLGSKVAGDAESYRYLAESIRMHPDQETLKQMMEQAGLDSVEYFNLTAGVVALHVGRRL.

S-adenosyl-L-methionine-binding positions include Thr69, Asp90, and 116 to 117; that span reads DA.

Belongs to the class I-like SAM-binding methyltransferase superfamily. MenG/UbiE family.

It carries out the reaction a 2-demethylmenaquinol + S-adenosyl-L-methionine = a menaquinol + S-adenosyl-L-homocysteine + H(+). The catalysed reaction is a 2-methoxy-6-(all-trans-polyprenyl)benzene-1,4-diol + S-adenosyl-L-methionine = a 5-methoxy-2-methyl-3-(all-trans-polyprenyl)benzene-1,4-diol + S-adenosyl-L-homocysteine + H(+). It functions in the pathway quinol/quinone metabolism; menaquinone biosynthesis; menaquinol from 1,4-dihydroxy-2-naphthoate: step 2/2. Its pathway is cofactor biosynthesis; ubiquinone biosynthesis. Functionally, methyltransferase required for the conversion of demethylmenaquinol (DMKH2) to menaquinol (MKH2) and the conversion of 2-polyprenyl-6-methoxy-1,4-benzoquinol (DDMQH2) to 2-polyprenyl-3-methyl-6-methoxy-1,4-benzoquinol (DMQH2). This chain is Ubiquinone/menaquinone biosynthesis C-methyltransferase UbiE, found in Ralstonia nicotianae (strain ATCC BAA-1114 / GMI1000) (Ralstonia solanacearum).